The sequence spans 88 residues: Exodeoxyribonuclease 7 small subunit (88 aa).

Residues 69–88 are disordered; the sequence is ALAEEADPEDGASGADGGGA.

It belongs to the XseB family. In terms of assembly, heterooligomer composed of large and small subunits.

Its subcellular location is the cytoplasm. The enzyme catalyses Exonucleolytic cleavage in either 5'- to 3'- or 3'- to 5'-direction to yield nucleoside 5'-phosphates.. Bidirectionally degrades single-stranded DNA into large acid-insoluble oligonucleotides, which are then degraded further into small acid-soluble oligonucleotides. The protein is Exodeoxyribonuclease 7 small subunit of Streptomyces coelicolor (strain ATCC BAA-471 / A3(2) / M145).